Reading from the N-terminus, the 563-residue chain is Alpha-keto-acid decarboxylase (563 aa).

Position 59 (Glu-59) interacts with thiamine diphosphate. Residues Ser-348–Gln-367 form a disordered region. A compositionally biased stretch (pro residues) spans Val-351–Glu-366. Positions Thr-394–Val-476 are thiamine pyrophosphate binding. Mg(2+)-binding residues include Asp-444, Asn-471, and Gly-473.

Belongs to the TPP enzyme family. It depends on a metal cation as a cofactor. Thiamine diphosphate is required as a cofactor.

In terms of biological role, decarboxylates branched-chain and aromatic alpha-keto acids to aldehydes. The protein is Alpha-keto-acid decarboxylase (kdc) of Mycobacterium avium (strain 104).